Consider the following 308-residue polypeptide: Protein translocase subunit SecF (308 aa).

6 helical membrane passes run 28–48, 140–160, 164–184, 194–214, 246–266, and 272–292; these read SIIL…NFGI, IEAG…YIWV, WYFG…ALGF, LSTI…SVVI, ILTV…GGEA, and ILVF…SAPI.

It belongs to the SecD/SecF family. SecF subfamily. As to quaternary structure, forms a complex with SecD. Part of the essential Sec protein translocation apparatus which comprises SecA, SecYEG and auxiliary proteins SecDF-YajC and YidC.

The protein localises to the cell inner membrane. Functionally, part of the Sec protein translocase complex. Interacts with the SecYEG preprotein conducting channel. SecDF uses the proton motive force (PMF) to complete protein translocation after the ATP-dependent function of SecA. The sequence is that of Protein translocase subunit SecF from Rickettsia rickettsii (strain Sheila Smith).